The following is a 263-amino-acid chain: Endonuclease 8 (263 aa).

P2 acts as the Schiff-base intermediate with DNA in catalysis. The active-site Proton donor is E3. Catalysis depends on K53, which acts as the Proton donor; for beta-elimination activity. Residues Q70, R125, and N169 each coordinate DNA. The FPG-type zinc finger occupies 229–263 (KVFHRDGEPCERCGGIIEKTTLSSRPFYWCPGCQH). R253 acts as the Proton donor; for delta-elimination activity in catalysis.

The protein belongs to the FPG family. It depends on Zn(2+) as a cofactor.

It carries out the reaction 2'-deoxyribonucleotide-(2'-deoxyribose 5'-phosphate)-2'-deoxyribonucleotide-DNA = a 3'-end 2'-deoxyribonucleotide-(2,3-dehydro-2,3-deoxyribose 5'-phosphate)-DNA + a 5'-end 5'-phospho-2'-deoxyribonucleoside-DNA + H(+). Functionally, involved in base excision repair of DNA damaged by oxidation or by mutagenic agents. Acts as a DNA glycosylase that recognizes and removes damaged bases. Has a preference for oxidized pyrimidines, such as thymine glycol, 5,6-dihydrouracil and 5,6-dihydrothymine. Has AP (apurinic/apyrimidinic) lyase activity and introduces nicks in the DNA strand. Cleaves the DNA backbone by beta-delta elimination to generate a single-strand break at the site of the removed base with both 3'- and 5'-phosphates. This Escherichia coli O127:H6 (strain E2348/69 / EPEC) protein is Endonuclease 8.